The following is a 245-amino-acid chain: tRNA pseudouridine synthase A (245 aa).

Residue Asp52 is the Nucleophile of the active site. Tyr111 contributes to the substrate binding site.

The protein belongs to the tRNA pseudouridine synthase TruA family. In terms of assembly, homodimer.

The catalysed reaction is uridine(38/39/40) in tRNA = pseudouridine(38/39/40) in tRNA. Formation of pseudouridine at positions 38, 39 and 40 in the anticodon stem and loop of transfer RNAs. The protein is tRNA pseudouridine synthase A of Wolbachia sp. subsp. Drosophila simulans (strain wRi).